The following is a 183-amino-acid chain: Putative lipoprotein LpqE (183 aa).

The first 30 residues, 1-30, serve as a signal peptide directing secretion; the sequence is MSRFKISLPALATRVAVLGFLTLMASVLGG. Cysteine 31 carries N-palmitoyl cysteine lipidation. Cysteine 31 is lipidated: S-diacylglycerol cysteine.

The protein resides in the cell membrane. The chain is Putative lipoprotein LpqE (lpqE) from Mycobacterium leprae (strain TN).